We begin with the raw amino-acid sequence, 371 residues long: DNA replication and repair protein RecF (371 aa).

ATP is bound at residue 30–37 (GSNGQGKT).

This sequence belongs to the RecF family.

Its subcellular location is the cytoplasm. The RecF protein is involved in DNA metabolism; it is required for DNA replication and normal SOS inducibility. RecF binds preferentially to single-stranded, linear DNA. It also seems to bind ATP. The chain is DNA replication and repair protein RecF from Acidothermus cellulolyticus (strain ATCC 43068 / DSM 8971 / 11B).